A 264-amino-acid chain; its full sequence is Apolipoprotein A-I (264 aa).

An N-terminal signal peptide occupies residues 1–18; it reads MKAVVLAVALVFLTGSQA. 2 consecutive repeat copies span residues 67–88 and 89–110. Residues 67–264 form a 10 X approximate tandem repeats region; it reads LNLLENWDTL…DKARETLTAQ (198 aa). Met-109 carries the post-translational modification Methionine sulfoxide. Residues 111–121 form a 3; half-length repeat; sequence KDLEEVKQNVQ. Repeat copies occupy residues 122–143, 144–165, and 166–187. One copy of the 7; truncated repeat lies at 188-207; it reads PHSDKLRESLAQRLAELKSN. Copy 8 of the repeat occupies 208–229; sequence PTLNEYHTRAKTHLNTFGEKAR. The stretch at 230-240 is one 9; half-length repeat; it reads PALEDLRHTLI. Repeat 10 spans residues 241 to 264; sequence PILDTLKTKVKSVIDKARETLTAQ.

This sequence belongs to the apolipoprotein A1/A4/E family. Homodimer. Interacts with APOA1BP and CLU. Component of a sperm activating protein complex (SPAP), consisting of APOA1, an immunoglobulin heavy chain, an immunoglobulin light chain and albumin. Interacts with NDRG1. Interacts with SCGB3A2. Interacts with NAXE and YJEFN3. In terms of processing, glycosylated. Post-translationally, palmitoylated. Phosphorylation sites are present in the extracellular medium.

The protein resides in the secreted. Functionally, participates in the reverse transport of cholesterol from tissues to the liver for excretion by promoting cholesterol efflux from tissues and by acting as a cofactor for the lecithin cholesterol acyltransferase (LCAT). As part of the SPAP complex, activates spermatozoa motility. In Mus pahari (Gairdner's shrew-mouse), this protein is Apolipoprotein A-I (Apoa1).